The sequence spans 226 residues: MAGGGAGDPGQGAAAAAAAAPETREHLFKVLVIGELGVGKTSIIKRYVHQLFSQHYRATIGVDFALKVLNWDSRTLVRLQLWDIAGQERFGNMTRVYYKEAVGALVVFDISRGSPFEAVLKWKNDLDSKVHLPNGSPIPAVLLANKCDQKKDSGQNPSQMDQFCKEHGFTGWFETSAKDNINIDEAARFLVENILANHQSFPSEENDGRIKLDEETMKKENKSHCC.

At alanine 2 the chain carries N-acetylalanine. GTP-binding residues include valine 38, glycine 39, lysine 40, threonine 41, serine 42, serine 53, glutamine 54, tyrosine 56, and threonine 59. Threonine 41 is a Mg(2+) binding site. The Switch 1 motif lies at 50 to 64 (QLFSQHYRATIGVDF). Threonine 59 serves as a coordination point for Mg(2+). Serine 73 bears the Phosphoserine mark. Aspartate 83 is a Mg(2+) binding site. Positions 86, 145, 146, 148, 177, and 178 each coordinate GTP. The Switch 2 motif lies at 86–99 (GQERFGNMTRVYYK). The tract at residues 180–199 (NINIDEAARFLVENILANHQ) is PKA-RII subunit binding domain. The tract at residues 202-226 (PSEENDGRIKLDEETMKKENKSHCC) is disordered. The segment covering 206–226 (NDGRIKLDEETMKKENKSHCC) has biased composition (basic and acidic residues). S-geranylgeranyl cysteine attachment occurs at residues cysteine 225 and cysteine 226.

Belongs to the small GTPase superfamily. Rab family. Interacts with ANKRD27. A decreased interaction with ANKRD27 seen in the presence of SGSM2. Interacts with LRRK2 (via N-terminus); this interaction results in stimulation of RAB10 phosphorylation by LRRK2. The cofactor is Mg(2+).

The protein localises to the mitochondrion. The protein resides in the mitochondrion outer membrane. It localises to the cytoplasmic vesicle. It is found in the phagosome. Its subcellular location is the phagosome membrane. The protein localises to the melanosome. The protein resides in the melanosome membrane. The catalysed reaction is GTP + H2O = GDP + phosphate + H(+). Its activity is regulated as follows. Regulated by guanine the nucleotide exchange factor (GEF) BLOC-3 complex composed of HPS1 and HPS4 which promote the exchange of bound GDP for free GTP. Regulated by the GTPase activating protein (GAP) SGSM2/RUTBC1 which increases the GTP hydrolysis activity. Inhibited by GDP dissociation inhibitors (GDIs) which prevent Rab-GDP dissociation. In terms of biological role, the small GTPases Rab are key regulators of intracellular membrane trafficking, from the formation of transport vesicles to their fusion with membranes. Rabs cycle between an inactive GDP-bound form and an active GTP-bound form that is able to recruit to membranes different set of downstream effectors directly responsible for vesicle formation, movement, tethering and fusion. Also acts as an A-kinase anchoring protein by binding to the type II regulatory subunit of protein kinase A and anchoring it to the mitochondrion. Also involved in synchronization of mitochondrial fission. Plays a role in the maturation of phagosomes that engulf pathogens, such as S.aureus and M.tuberculosis. Plays an important role in the control of melanin production and melanosome biogenesis. In concert with RAB38, regulates the proper trafficking of melanogenic enzymes TYR, TYRP1 and DCT/TYRP2 to melanosomes in melanocytes. Stimulates phosphorylation of RAB10 'Thr-73' by LRRK2. This is Ras-related protein Rab-32 (RAB32) from Sus scrofa (Pig).